The following is a 71-amino-acid chain: Large ribosomal subunit protein bL31 (71 aa).

Cys16, Cys18, Cys38, and Cys41 together coordinate Zn(2+).

This sequence belongs to the bacterial ribosomal protein bL31 family. Type A subfamily. In terms of assembly, part of the 50S ribosomal subunit. Zn(2+) serves as cofactor.

Binds the 23S rRNA. The polypeptide is Large ribosomal subunit protein bL31 (Neisseria gonorrhoeae (strain ATCC 700825 / FA 1090)).